A 257-amino-acid polypeptide reads, in one-letter code: Phosphomannomutase (257 aa).

Catalysis depends on D19, which acts as the Nucleophile. Residues D19 and D21 each coordinate Mg(2+). Catalysis depends on D21, which acts as the Proton donor/acceptor. Alpha-D-mannose 1-phosphate is bound by residues R28, R133, R144, R151, S189, and D191. Positions 219, 231, 233, and 236 each coordinate Mg(2+).

This sequence belongs to the eukaryotic PMM family. In terms of assembly, homodimer.

The protein resides in the cytoplasm. The enzyme catalyses alpha-D-mannose 1-phosphate = D-mannose 6-phosphate. The protein operates within nucleotide-sugar biosynthesis; GDP-alpha-D-mannose biosynthesis; alpha-D-mannose 1-phosphate from D-fructose 6-phosphate: step 2/2. Involved in the synthesis of the GDP-mannose and dolichol-phosphate-mannose required for a number of critical mannosyl transfer reactions. This is Phosphomannomutase (pmm1) from Schizosaccharomyces pombe (strain 972 / ATCC 24843) (Fission yeast).